Here is a 411-residue protein sequence, read N- to C-terminus: MKKWQNIRKVVLAYSGGLDTSIILKWLQSTLDAEVVTFTADLGQGEELELARRKAEMLGVKEIYIEDLREEFVRDFVFPMFRANTVYEGAYLLGTSIARPLISKRLIEIAKETGADAIAHGATGKGNDQVRFELSAYALNPDIKIIAPWRDWDFKSRTDLFEFARMHQIPVEKDQQGEAPFSVDANLLHSSSEGKILENPALPAPEYVHIRTLSPEDAPDQATRITLGFKKGDAVSINGKNLSPATLLAELNRYGRDNGIGRLDLVENRFVGMKSRGFYETPGGTILLAAHRAIESLTLDRGAAHLKDELMPRYAELIYYGFWFSPERKMLQAAIDLSQEHVEGEVTLKLYKGNVIVEGRQSKKSLYSSELVTFEDDQGAYDQRDATGFIKLNALRLRTLARRCQGNQEKK.

Residues 13-21 and Ala40 each bind ATP; that span reads AYSGGLDTS. L-citrulline contacts are provided by Tyr91 and Ser96. Gly121 serves as a coordination point for ATP. The L-aspartate site is built by Thr123, Asn127, and Asp128. Position 127 (Asn127) interacts with L-citrulline. L-citrulline-binding residues include Arg131, Ser182, Ser191, Glu267, and Tyr279.

Belongs to the argininosuccinate synthase family. Type 1 subfamily. As to quaternary structure, homotetramer.

It is found in the cytoplasm. The catalysed reaction is L-citrulline + L-aspartate + ATP = 2-(N(omega)-L-arginino)succinate + AMP + diphosphate + H(+). Its pathway is amino-acid biosynthesis; L-arginine biosynthesis; L-arginine from L-ornithine and carbamoyl phosphate: step 2/3. The polypeptide is Argininosuccinate synthase (Bartonella tribocorum (strain CIP 105476 / IBS 506)).